The following is a 267-amino-acid chain: Thiamine thiazole synthase (267 aa).

Residues Ser-41, 60–61 (ER), Gly-68, Val-132, and 160–162 (HVD) each bind NAD(+). Fe cation contacts are provided by Asp-162 and His-177. NAD(+) is bound at residue Met-227. A glycine-binding site is contributed by Arg-237.

It belongs to the THI4 family. In terms of assembly, homooctamer; tetramer of dimers. It depends on Fe(2+) as a cofactor.

The enzyme catalyses hydrogen sulfide + glycine + NAD(+) = ADP-5-ethyl-4-methylthiazole-2-carboxylate + nicotinamide + 3 H2O + H(+). The protein operates within cofactor biosynthesis; thiamine diphosphate biosynthesis. Its function is as follows. Involved in the biosynthesis of the thiazole moiety of thiamine. Catalyzes the conversion of NAD and glycine to adenosine diphosphate 5-(2-hydroxyethyl)-4-methylthiazole-2-carboxylate (ADT), an adenylated thiazole intermediate, using free sulfide as a source of sulfur. In Saccharolobus islandicus (strain Y.N.15.51 / Yellowstone #2) (Sulfolobus islandicus), this protein is Thiamine thiazole synthase.